A 281-amino-acid chain; its full sequence is Deoxyribonuclease-1 (281 aa).

Positions 1–21 (MRSEMLTALLTLAVLLQVAGS) are cleaved as a signal peptide. Asparagine 39 carries N-linked (GlcNAc...) asparagine glycosylation. Residue glutamate 99 is part of the active site. A disulfide bridge connects residues cysteine 122 and cysteine 125. The active site involves histidine 155.

Belongs to the DNase I family. It depends on Ca(2+) as a cofactor. Requires Mg(2+) as cofactor. Equivalent levels in pancreas and parotid gland, low amounts in kidney, liver, small intestine, stomach and thymus.

The protein resides in the secreted. The protein localises to the zymogen granule. It is found in the nucleus envelope. The enzyme catalyses Endonucleolytic cleavage to 5'-phosphodinucleotide and 5'-phosphooligonucleotide end-products.. Its function is as follows. Serum endocuclease secreted into body fluids by a wide variety of exocrine and endocrine organs. Expressed by non-hematopoietic tissues and preferentially cleaves protein-free DNA. Among other functions, seems to be involved in cell death by apoptosis. Binds specifically to G-actin and blocks actin polymerization. Preferentially attacks double-stranded DNA and produces oligonucleotides with 5'-phospho and 3'-hydroxy termini. Together with DNASE1L3, plays a key role in degrading neutrophil extracellular traps (NETs). NETs are mainly composed of DNA fibers and are released by neutrophils to bind pathogens during inflammation. Degradation of intravascular NETs by DNASE1 and DNASE1L3 is required to prevent formation of clots that obstruct blood vessels and cause organ damage following inflammation. In Oryctolagus cuniculus (Rabbit), this protein is Deoxyribonuclease-1 (DNASE1).